A 71-amino-acid chain; its full sequence is Ranatuerin-2Va (71 aa).

The N-terminal stretch at 1-22 is a signal peptide; the sequence is MFTLKKSFLLLFFLGTITLSLC. The propeptide occupies 23–43; the sequence is EQERGADEDDGVEMTEEEVKR. Cys-66 and Cys-71 are disulfide-bonded.

In terms of tissue distribution, expressed by the skin glands.

It localises to the secreted. In terms of biological role, antimicrobial peptide. The sequence is that of Ranatuerin-2Va from Odorrana versabilis (Chinese bamboo leaf odorous frog).